Here is a 213-residue protein sequence, read N- to C-terminus: MITIVLLILAYLLGSIPSGLWIGQVFFQINLREHGSGNTGTTNTFRILGKKAGMATFVIDFFKGTLATLLPIMFHLQGVSPLIFGLLAVIGHTFPIFAGFKGGKAVATSAGVVFGFAPVFCLYLAVVFFGTLYLGSMISLSSVTASIAAVIGVLLFPLFGFILNNYDPLFIAIILALASLIIIRHKDNIARIKNKTENLVPWGLNLTHQDPKK.

6 helical membrane-spanning segments follow: residues isoleucine 2–isoleucine 22, methionine 54–phenylalanine 74, serine 80–phenylalanine 100, alanine 110–glycine 130, valine 143–leucine 163, and asparagine 165–histidine 185.

The protein belongs to the PlsY family. Probably interacts with PlsX.

The protein localises to the cell membrane. It carries out the reaction an acyl phosphate + sn-glycerol 3-phosphate = a 1-acyl-sn-glycero-3-phosphate + phosphate. The protein operates within lipid metabolism; phospholipid metabolism. Its function is as follows. Catalyzes the transfer of an acyl group from acyl-phosphate (acyl-PO(4)) to glycerol-3-phosphate (G3P) to form lysophosphatidic acid (LPA). This enzyme utilizes acyl-phosphate as fatty acyl donor, but not acyl-CoA or acyl-ACP. The sequence is that of Glycerol-3-phosphate acyltransferase from Streptococcus pneumoniae (strain Taiwan19F-14).